Consider the following 379-residue polypeptide: Sulfate adenylyltransferase (379 aa).

It belongs to the sulfate adenylyltransferase family.

It carries out the reaction sulfate + ATP + H(+) = adenosine 5'-phosphosulfate + diphosphate. It participates in sulfur metabolism; hydrogen sulfide biosynthesis; sulfite from sulfate: step 1/3. This chain is Sulfate adenylyltransferase (sat), found in Pyrococcus abyssi (strain GE5 / Orsay).